A 344-amino-acid polypeptide reads, in one-letter code: N-acetyl-gamma-glutamyl-phosphate reductase (344 aa).

The active site involves C150.

The protein belongs to the NAGSA dehydrogenase family. Type 1 subfamily.

It localises to the cytoplasm. The catalysed reaction is N-acetyl-L-glutamate 5-semialdehyde + phosphate + NADP(+) = N-acetyl-L-glutamyl 5-phosphate + NADPH + H(+). It functions in the pathway amino-acid biosynthesis; L-arginine biosynthesis; N(2)-acetyl-L-ornithine from L-glutamate: step 3/4. Functionally, catalyzes the NADPH-dependent reduction of N-acetyl-5-glutamyl phosphate to yield N-acetyl-L-glutamate 5-semialdehyde. The polypeptide is N-acetyl-gamma-glutamyl-phosphate reductase (Pseudomonas fluorescens (strain SBW25)).